Consider the following 599-residue polypeptide: Calmodulin-binding protein 60 E (599 aa).

Positions 1-21 are disordered; it reads MNKRGYECSQEDTDKLPESKR. Residues 1 to 80 form a calmodulin-binding region; the sequence is MNKRGYECSQ…LTSRSPEPKR (80 aa). The tract at residues 150–273 is DNA-binding; the sequence is EDDEDWTREH…VLHKKLLKAN (124 aa).

This sequence belongs to the plant ACBP60 protein family. As to quaternary structure, interacts with calmodulin (CaM).

The protein localises to the nucleus. Functionally, transcription activator that binds DNA in a sequence-specific manner, likely 5'-GAAATTTTGG-3', to promote the expression of target genes. This Arabidopsis thaliana (Mouse-ear cress) protein is Calmodulin-binding protein 60 E.